Here is a 562-residue protein sequence, read N- to C-terminus: NAD-dependent malic enzyme (562 aa).

Catalysis depends on Tyr101, which acts as the Proton donor. Residue Arg154 participates in NAD(+) binding. Catalysis depends on Lys172, which acts as the Proton acceptor. Residues Glu243, Asp244, and Asp267 each contribute to the a divalent metal cation site. 2 residues coordinate NAD(+): Asp267 and Asn415.

This sequence belongs to the malic enzymes family. Homotetramer. Mg(2+) is required as a cofactor. Requires Mn(2+) as cofactor.

The enzyme catalyses (S)-malate + NAD(+) = pyruvate + CO2 + NADH. The catalysed reaction is oxaloacetate + H(+) = pyruvate + CO2. This is NAD-dependent malic enzyme from Shewanella frigidimarina (strain NCIMB 400).